Here is a 209-residue protein sequence, read N- to C-terminus: Uracil phosphoribosyltransferase (209 aa).

5-phospho-alpha-D-ribose 1-diphosphate-binding positions include R79, R104, and 131–139; that span reads DPMLATGGS. Residues I194 and 199–201 contribute to the uracil site; that span reads GDA. D200 contributes to the 5-phospho-alpha-D-ribose 1-diphosphate binding site.

Belongs to the UPRTase family. Requires Mg(2+) as cofactor.

The catalysed reaction is UMP + diphosphate = 5-phospho-alpha-D-ribose 1-diphosphate + uracil. It functions in the pathway pyrimidine metabolism; UMP biosynthesis via salvage pathway; UMP from uracil: step 1/1. Its activity is regulated as follows. Allosterically activated by GTP. Its function is as follows. Catalyzes the conversion of uracil and 5-phospho-alpha-D-ribose 1-diphosphate (PRPP) to UMP and diphosphate. This Alkaliphilus oremlandii (strain OhILAs) (Clostridium oremlandii (strain OhILAs)) protein is Uracil phosphoribosyltransferase.